The primary structure comprises 144 residues: MRLNTLSPANGARHSRKRLGRGIGSGFGKTSGRGHKGQKSRSGSSIRRGFEGGQMPLYRRLPKFGFNSRKKNITTEVRLSDLSNLSTNIIDLNVLKQENIIKKNIKYAKIILSGKLTVPLIIRGLLVSKGARSEIENTGGKVEG.

A disordered region spans residues 1 to 52 (MRLNTLSPANGARHSRKRLGRGIGSGFGKTSGRGHKGQKSRSGSSIRRGFEG). Residues 21–31 (RGIGSGFGKTS) are compositionally biased toward gly residues.

It belongs to the universal ribosomal protein uL15 family. As to quaternary structure, part of the 50S ribosomal subunit.

In terms of biological role, binds to the 23S rRNA. The protein is Large ribosomal subunit protein uL15 of Buchnera aphidicola subsp. Acyrthosiphon pisum (strain 5A).